A 37-amino-acid chain; its full sequence is MVEALLSGIVLGLISITSAGLFVTAYLQYRRGDQLDL.

Residues 5–25 (LLSGIVLGLISITSAGLFVTA) form a helical membrane-spanning segment.

The protein belongs to the PetG family. As to quaternary structure, the 4 large subunits of the cytochrome b6-f complex are cytochrome b6, subunit IV (17 kDa polypeptide, PetD), cytochrome f and the Rieske protein, while the 4 small subunits are PetG, PetL, PetM and PetN. The complex functions as a dimer.

The protein resides in the plastid. It is found in the chloroplast thylakoid membrane. Functionally, component of the cytochrome b6-f complex, which mediates electron transfer between photosystem II (PSII) and photosystem I (PSI), cyclic electron flow around PSI, and state transitions. PetG is required for either the stability or assembly of the cytochrome b6-f complex. This chain is Cytochrome b6-f complex subunit 5, found in Psilotum nudum (Whisk fern).